The sequence spans 211 residues: Dibenzothiophene metabolism operon protein DoxH (211 aa).

Its pathway is aromatic compound metabolism; naphthalene degradation. In terms of biological role, may be involved in the conversion of 2-hydroxy-4-(2'-oxo-3,5-cyclohexadienyl)-buta-2,4-dienoate to cis-O-hydroxybenzylidenepyruvate. DoxH and doxJ encode different enzymes that may have interchangeable functions. The chain is Dibenzothiophene metabolism operon protein DoxH (doxH) from Pseudomonas sp. (strain C18).